The chain runs to 178 residues: Large ribosomal subunit protein uL6 (178 aa).

The protein belongs to the universal ribosomal protein uL6 family. Part of the 50S ribosomal subunit.

Functionally, this protein binds to the 23S rRNA, and is important in its secondary structure. It is located near the subunit interface in the base of the L7/L12 stalk, and near the tRNA binding site of the peptidyltransferase center. In Listeria innocua serovar 6a (strain ATCC BAA-680 / CLIP 11262), this protein is Large ribosomal subunit protein uL6.